The chain runs to 594 residues: UV-stimulated scaffold protein A homolog (594 aa).

The tract at residues 24–170 (RKNLNRFIRE…VTLKKTKFVD (147 aa)) is VHS-like. The stretch at 170 to 198 (DYENGAKKIEAERKRKKILEERKMKMIEN) forms a coiled coil. The UVSSA-type zinc finger occupies 466–493 (RKVCLAKMKSGKLCPRKDYYTCPLHGKI). Zn(2+) contacts are provided by Cys469, Cys479, Cys487, and His490. Residues 503-540 (INEEDRLEENYRKEQNHLKEADKIRQMIEKEYESKTKR) are a coiled coil. A disordered region spans residues 533 to 558 (EYESKTKRRKKHDVDTTASEDVRNRL). Positions 544–558 (HDVDTTASEDVRNRL) are enriched in basic and acidic residues.

This sequence belongs to the UVSSA family.

The protein resides in the chromosome. Its function is as follows. Factor involved in transcription-coupled nucleotide excision repair (TC-NER) in response to UV damage. TC-NER allows RNA polymerase II-blocking lesions to be rapidly removed from the transcribed strand of active genes. The chain is UV-stimulated scaffold protein A homolog from Caenorhabditis elegans.